A 694-amino-acid polypeptide reads, in one-letter code: Ribonuclease R (694 aa).

Residues 204 to 525 (RKDLRDLLCF…IVHRLLFHPL (322 aa)) enclose the RNB domain. Residues 571 to 648 (ATLYKAFIIT…LTQSIEWTLV (78 aa)) enclose the S1 motif domain. The tract at residues 652–694 (TKAKAKRTSKKKKTESVTTKEKKKSPAKKKKGATKTKKGSGKN) is disordered. Composition is skewed to basic residues over residues 654-664 (AKAKRTSKKKK) and 672-694 (EKKK…SGKN).

The protein belongs to the RNR ribonuclease family. RNase R subfamily.

The protein resides in the cytoplasm. It carries out the reaction Exonucleolytic cleavage in the 3'- to 5'-direction to yield nucleoside 5'-phosphates.. In terms of biological role, 3'-5' exoribonuclease that releases 5'-nucleoside monophosphates and is involved in maturation of structured RNAs. This Chlamydia trachomatis serovar D (strain ATCC VR-885 / DSM 19411 / UW-3/Cx) protein is Ribonuclease R.